A 1174-amino-acid polypeptide reads, in one-letter code: Tight junction protein 2 (1174 aa).

The PDZ 1 domain maps to 10–97 (TVTLQKDSKR…IAAIVVKRPR (88 aa)). Residues serine 107, serine 127, serine 130, serine 140, serine 145, serine 147, serine 151, serine 173, serine 195, and serine 217 each carry the phosphoserine modification. A compositionally biased stretch (basic and acidic residues) spans 125-137 (GRSARSGYSERSR). Positions 125-290 (GRSARSGYSE…AGQPDSDRPI (166 aa)) are disordered. Positions 146-214 (RSWEDSPERG…DYGRPGERSH (69 aa)) are enriched in basic and acidic residues. Positions 220-235 (RGYDRGYDRGYDRGYD) are enriched in basic and acidic residues. Serine 239 carries the post-translational modification Phosphoserine. Composition is skewed to basic and acidic residues over residues 243 to 266 (EYGR…EHLR) and 274 to 288 (LRGR…DSDR). The PDZ 2 domain occupies 291 to 369 (GVLLMKSKAN…KLQLVVLRDS (79 aa)). Serine 309, serine 382, serine 384, serine 390, serine 399, serine 408, serine 414, and serine 415 each carry phosphoserine. Positions 391 to 430 (EIESNRSFSPEERRQQYSDYDYHSSNEKLKERPNSREDMQ) are disordered. Residues 399–430 (SPEERRQQYSDYDYHSSNEKLKERPNSREDMQ) are compositionally biased toward basic and acidic residues. Position 439 is a phosphothreonine (threonine 439). The segment at 456 to 490 (ENSKEPRYQEEPPAPQPKAAPRTFLRPSPEDEAIY) is disordered. Phosphoserine is present on serine 483. In terms of domain architecture, PDZ 3 spans 493-574 (NTKMVRFKKG…GEMVTILAQS (82 aa)). Tyrosine 558 bears the Phosphotyrosine mark. Residues 588–653 (GDSFFIRSHF…PNKSRAEQMA (66 aa)) enclose the SH3 domain. The region spanning 679–860 (MKKNLRKSRE…WFGSLKDTIQ (182 aa)) is the Guanylate kinase-like domain. A phosphoserine mark is found at serine 686 and serine 886. A Phosphothreonine modification is found at threonine 889. Serine 897 and serine 904 each carry phosphoserine. Disordered regions lie at residues 904-1065 (SDFE…VLGK) and 1100-1174 (DIYA…DTEL). Phosphothreonine occurs at positions 909 and 917. The segment covering 940–951 (VQHEESIRKPSP) has biased composition (basic and acidic residues). A phosphoserine mark is found at serine 950, serine 962, serine 970, serine 990, and serine 1052. Over residues 978–1000 (EPPKAKTQNREESFDISRSHDYK) the composition is skewed to basic and acidic residues. Positions 1044–1056 (ESEEVGEGSEEQE) are enriched in acidic residues. The residue at position 1102 (tyrosine 1102) is a Phosphotyrosine. Phosphoserine occurs at positions 1131 and 1143. Over residues 1150–1159 (YRQQLSEHSK) the composition is skewed to basic and acidic residues. Positions 1172–1174 (TEL) are interaction with SCRIB.

Belongs to the MAGUK family. Homodimer. Interacts (via PDZ2 domain) with TJP1/ZO1 (via PDZ2 domain). Interacts with UBN1. Interacts with SCRIB. Interacts with OCLN. Interacts with SAFB in the nucleus. Interacts with USP53 (via the C-terminal region). Interacts with claudins, including CLDN1, CLDN2, CLDN3, CLDN5 and CLDN7. Interacts with CLDN18. Interacts (via N-terminus) with CTNNA1. In terms of processing, phosphorylated.

The protein localises to the cell junction. It is found in the adherens junction. The protein resides in the cell membrane. Its subcellular location is the nucleus. It localises to the tight junction. In terms of biological role, plays a role in tight junctions and adherens junctions. Acts as a positive regulator of RANKL-induced osteoclast differentiation, potentially via mediating downstream transcriptional activity. This chain is Tight junction protein 2, found in Canis lupus familiaris (Dog).